We begin with the raw amino-acid sequence, 236 residues long: 1-(5-phosphoribosyl)-5-[(5-phosphoribosylamino)methylideneamino] imidazole-4-carboxamide isomerase (236 aa).

Asp8 (proton acceptor) is an active-site residue. Asp127 serves as the catalytic Proton donor.

Belongs to the HisA/HisF family.

The protein localises to the cytoplasm. The enzyme catalyses 1-(5-phospho-beta-D-ribosyl)-5-[(5-phospho-beta-D-ribosylamino)methylideneamino]imidazole-4-carboxamide = 5-[(5-phospho-1-deoxy-D-ribulos-1-ylimino)methylamino]-1-(5-phospho-beta-D-ribosyl)imidazole-4-carboxamide. The protein operates within amino-acid biosynthesis; L-histidine biosynthesis; L-histidine from 5-phospho-alpha-D-ribose 1-diphosphate: step 4/9. The protein is 1-(5-phosphoribosyl)-5-[(5-phosphoribosylamino)methylideneamino] imidazole-4-carboxamide isomerase of Campylobacter hominis (strain ATCC BAA-381 / DSM 21671 / CCUG 45161 / LMG 19568 / NCTC 13146 / CH001A).